The following is a 54-amino-acid chain: Ovomucoid (54 aa).

The region spanning 4–54 is the Kazal-like domain; that stretch reads VDCSDYPKPVCSLEYMPLCGSDNKTYGNKCNFCNAVADSNGTLTLSHFGKC. Disulfide bonds link Cys6–Cys36, Cys14–Cys33, and Cys22–Cys54. Residue Asn43 is glycosylated (N-linked (GlcNAc...) asparagine).

Its subcellular location is the secreted. The polypeptide is Ovomucoid (Guira guira (Guira cuckoo)).